Consider the following 361-residue polypeptide: Phospho-N-acetylmuramoyl-pentapeptide-transferase (361 aa).

The next 10 helical transmembrane spans lie at 25–45, 72–92, 95–115, 135–155, 169–189, 200–220, 240–260, 264–284, 289–309, and 338–358; these read TGGAMVTGALFVFMFGPWIID, TPTMGGLMILSGLTVGTLLWA, LNPYVWIVLAVTLGFGFVGFY, LLIEFTIAGAACFALVWLGRA, VMLNLGWAFVVFGAFVVVGAG, GLAIVPVMIAAASFGLISYLA, LAVLCGALLGAGLGFLWFNAP, IFMGDTGSLALGGMLGSIAVA, IVLAVIGGLFVLEAVSVIVQV, and QIVIRFWIIAVMLALAGLSTL.

It belongs to the glycosyltransferase 4 family. MraY subfamily. Mg(2+) is required as a cofactor.

Its subcellular location is the cell inner membrane. The catalysed reaction is UDP-N-acetyl-alpha-D-muramoyl-L-alanyl-gamma-D-glutamyl-meso-2,6-diaminopimeloyl-D-alanyl-D-alanine + di-trans,octa-cis-undecaprenyl phosphate = di-trans,octa-cis-undecaprenyl diphospho-N-acetyl-alpha-D-muramoyl-L-alanyl-D-glutamyl-meso-2,6-diaminopimeloyl-D-alanyl-D-alanine + UMP. It participates in cell wall biogenesis; peptidoglycan biosynthesis. Its function is as follows. Catalyzes the initial step of the lipid cycle reactions in the biosynthesis of the cell wall peptidoglycan: transfers peptidoglycan precursor phospho-MurNAc-pentapeptide from UDP-MurNAc-pentapeptide onto the lipid carrier undecaprenyl phosphate, yielding undecaprenyl-pyrophosphoryl-MurNAc-pentapeptide, known as lipid I. In Rhodopseudomonas palustris (strain ATCC BAA-98 / CGA009), this protein is Phospho-N-acetylmuramoyl-pentapeptide-transferase.